The primary structure comprises 123 residues: Anti-lipopolysaccharide factor (123 aa).

Positions 1 to 26 (MRTRVMAGLCVALVVMCLYMPQPCEA) are cleaved as a signal peptide. A disulfide bridge links Cys55 with Cys76.

In terms of tissue distribution, strong expression in hemocytes, heart and muscle, with weaker expression detected in gills and hepatopancreas. No expression detected in eyes.

The protein localises to the secreted. Its function is as follows. Binds to bacterial LPS and may specifically inhibit the LPS-mediated activation of the hemolymph coagulation. It has a strong antibacterial effect especially on the growth of Gram-negative bacteria. This chain is Anti-lipopolysaccharide factor, found in Scylla serrata (Mud crab).